The primary structure comprises 60 residues: Arabinogalactan protein 14 (60 aa).

The N-terminal stretch at 1–28 (MEAMKMKLYVVVLVAVIAFSTVHQTVAA) is a signal peptide. 4-hydroxyproline occurs at positions 32, 34, and 36. O-linked (Ara...) hydroxyproline glycosylation is found at proline 32, proline 34, and proline 36. Serine 38 carries GPI-anchor amidated serine lipidation. Residues 39–60 (DASSFIPTFFASVAVMAFGFFF) constitute a propeptide, removed in mature form.

This sequence belongs to the AG-peptide AGP family. Contains 4-hydroxyproline; hydroxylated on Pro-32, Pro-34 and Pro-36. Post-translationally, O-glycosylated on hydroxyprolines; noncontiguous hydroxylproline residues are glycosylated with arabinogalactan.

The protein resides in the cell membrane. In terms of biological role, proteoglycan that seems to be implicated in diverse developmental roles such as differentiation, cell-cell recognition, embryogenesis and programmed cell death. Involved in the regulation of root hair elongation. This is Arabinogalactan protein 14 from Arabidopsis thaliana (Mouse-ear cress).